Here is a 643-residue protein sequence, read N- to C-terminus: Ecto-NOX disulfide-thiol exchanger 1 (643 aa).

One can recognise an RRM domain in the interval Lys142 to Ala221. 2 coiled-coil regions span residues Val307 to Ile342 and Gln425 to Gly521.

Belongs to the ENOX family. It depends on Cu cation as a cofactor.

It is found in the cell membrane. Its subcellular location is the secreted. The protein resides in the extracellular space. Not inhibited by the antitumor sulfonylurea LY181984, the vabilloid capsaicin, and retinoids. Functionally, probably acts as a terminal oxidase of plasma electron transport from cytosolic NAD(P)H via hydroquinones to acceptors at the cell surface. Hydroquinone oxidase activity alternates with a protein disulfide-thiol interchange/oxidoreductase activity which may control physical membrane displacements associated with vesicle budding or cell enlargement. The activities oscillate with a period length of 24 minutes and play a role in control of the ultradian cellular biological clock. This is Ecto-NOX disulfide-thiol exchanger 1 (Enox1) from Mus musculus (Mouse).